A 319-amino-acid chain; its full sequence is tRNA U34 carboxymethyltransferase (319 aa).

Carboxy-S-adenosyl-L-methionine-binding positions include Lys-88, Trp-102, Lys-107, Gly-126, 176 to 177 (LE), Met-192, Tyr-196, and Arg-311.

This sequence belongs to the class I-like SAM-binding methyltransferase superfamily. CmoB family. Homotetramer.

The catalysed reaction is carboxy-S-adenosyl-L-methionine + 5-hydroxyuridine(34) in tRNA = 5-carboxymethoxyuridine(34) in tRNA + S-adenosyl-L-homocysteine + H(+). Catalyzes carboxymethyl transfer from carboxy-S-adenosyl-L-methionine (Cx-SAM) to 5-hydroxyuridine (ho5U) to form 5-carboxymethoxyuridine (cmo5U) at position 34 in tRNAs. The chain is tRNA U34 carboxymethyltransferase from Pseudomonas syringae pv. syringae (strain B728a).